The sequence spans 752 residues: Coiled-coil domain-containing protein 157 (752 aa).

Residues 135–154 show a composition bias toward polar residues; sequence QQPLPQKGANQRETPTSKPT. Disordered regions lie at residues 135–163 and 316–336; these read QQPLPQKGANQRETPTSKPTTKGEPARSP and QALKQEQGARRRQAEEDEQCL. Coiled-coil stretches lie at residues 276–544 and 579–615; these read AAEQ…LLVA and DHMERQVQSNDIRIRVLQEENGRLQSMLSKIREVAQQ. Residues 316-329 are compositionally biased toward basic and acidic residues; it reads QALKQEQGARRRQA. 2 disordered regions span residues 620–707 and 731–752; these read LIPQ…QPSK and RKRLSPGRGQASSAHQPQERPM. The segment covering 628–648 has biased composition (polar residues); sequence SPSSKGTQGATPPVQAKSTSP. Over residues 671-692 the composition is skewed to pro residues; that stretch reads TSPPRQPCTSPPRQPCTSPPRQ. Over residues 693–707 the composition is skewed to polar residues; sequence PCTSPSRQPCSQPSK.

This chain is Coiled-coil domain-containing protein 157 (CCDC157), found in Homo sapiens (Human).